The chain runs to 193 residues: Ion-translocating oxidoreductase complex subunit A (193 aa).

Transmembrane regions (helical) follow at residues 5 to 25 (LLLLVGTVLINNFVLVKFLGL), 39 to 59 (IGMGLATTFVMTLASACSYLM), 63 to 83 (ILIPLNIAYLRTLAFILVIAV), 102 to 122 (LLGIFLPLITTNCAVLGVALL), 134 to 154 (IIYGFGAATGFSLVLILFAAM), and 171 to 191 (SIAMITAGLMSLAFMGFTGLI).

Belongs to the NqrDE/RnfAE family. In terms of assembly, the complex is composed of six subunits: RnfA, RnfB, RnfC, RnfD, RnfE and RnfG.

The protein localises to the cell inner membrane. Its function is as follows. Part of a membrane-bound complex that couples electron transfer with translocation of ions across the membrane. This chain is Ion-translocating oxidoreductase complex subunit A, found in Aeromonas hydrophila subsp. hydrophila (strain ATCC 7966 / DSM 30187 / BCRC 13018 / CCUG 14551 / JCM 1027 / KCTC 2358 / NCIMB 9240 / NCTC 8049).